A 148-amino-acid chain; its full sequence is UPF0756 membrane protein YeaL (148 aa).

4 helical membrane-spanning segments follow: residues 14 to 34, 51 to 71, 86 to 106, and 112 to 132; these read ALGF…LIIV, LSIG…SGTL, LVAI…VTLM, and LVAG…GVPV.

The protein belongs to the UPF0756 family.

The protein localises to the cell membrane. This is UPF0756 membrane protein YeaL from Escherichia coli O157:H7.